The chain runs to 125 residues: Ribosome-binding factor A (125 aa).

The protein belongs to the RbfA family. In terms of assembly, monomer. Binds 30S ribosomal subunits, but not 50S ribosomal subunits or 70S ribosomes.

Its subcellular location is the cytoplasm. One of several proteins that assist in the late maturation steps of the functional core of the 30S ribosomal subunit. Associates with free 30S ribosomal subunits (but not with 30S subunits that are part of 70S ribosomes or polysomes). Required for efficient processing of 16S rRNA. May interact with the 5'-terminal helix region of 16S rRNA. The chain is Ribosome-binding factor A from Xylella fastidiosa (strain M23).